The sequence spans 109 residues: Large ribosomal subunit protein uL24 (109 aa).

The protein belongs to the universal ribosomal protein uL24 family. As to quaternary structure, part of the 50S ribosomal subunit.

One of two assembly initiator proteins, it binds directly to the 5'-end of the 23S rRNA, where it nucleates assembly of the 50S subunit. Its function is as follows. One of the proteins that surrounds the polypeptide exit tunnel on the outside of the subunit. The protein is Large ribosomal subunit protein uL24 of Legionella pneumophila subsp. pneumophila (strain Philadelphia 1 / ATCC 33152 / DSM 7513).